We begin with the raw amino-acid sequence, 360 residues long: DnaJ homolog subfamily C member 25 (360 aa).

A helical transmembrane segment spans residues 20-40; that stretch reads WMLLAPLLPALLLVRPAGALV. The region spanning 49-124 is the J domain; it reads DCYEVLGVSR…ETRKDYDYML (76 aa). 2 helical membrane-spanning segments follow: residues 150 to 170 and 244 to 264; these read VVIL…WWNS and LLLF…VWYC.

This sequence belongs to the DNAJC25 family.

The protein resides in the membrane. This chain is DnaJ homolog subfamily C member 25 (DNAJC25), found in Homo sapiens (Human).